Reading from the N-terminus, the 187-residue chain is POM121 and ZP3 fusion protein (187 aa).

Positions 166–187 are disordered; the sequence is GTPSHSRRQPRVVSQWSTSASL. Over residues 177–187 the composition is skewed to polar residues; the sequence is VVSQWSTSASL.

As to expression, expressed in spleen, thymus, pancreas, testis, ovary, small intestine, colon and lymphocytes.

The polypeptide is POM121 and ZP3 fusion protein (POMZP3) (Homo sapiens (Human)).